Reading from the N-terminus, the 180-residue chain is Ribosome maturation factor RimM (180 aa).

Residues 97–176 enclose the PRC barrel domain; that stretch reads EGEFFYCDLI…KITTNNAKTL (80 aa).

It belongs to the RimM family. As to quaternary structure, binds ribosomal protein uS19.

It localises to the cytoplasm. In terms of biological role, an accessory protein needed during the final step in the assembly of 30S ribosomal subunit, possibly for assembly of the head region. Essential for efficient processing of 16S rRNA. May be needed both before and after RbfA during the maturation of 16S rRNA. It has affinity for free ribosomal 30S subunits but not for 70S ribosomes. The chain is Ribosome maturation factor RimM from Helicobacter acinonychis (strain Sheeba).